Reading from the N-terminus, the 538-residue chain is MAVSSKHIPAPDLHRVRRALLSVSDKTGLIDFAKALHAQGVEILSTGGTAKSIAAEGIPVKDVSEVTGFPEIMDGRVKTLHPAVHGGLLAVRNDREHVAAMEEHGIGGIDLAVINLYPFEEVRFKGGDYDTTVENIDIGGPAMIRASAKNHAYVATVVDPADYADVVAELEKHAGSLPLAFRKKLAAKAFSRTAAYDAAISNWFAEAINEETPVYRSVAGKLHSVMRYGENPHQTAGFYLTGEKRPGVATATQLQGKQLSYNNINDTDAAFELVAEFDPARTAAVAIIKHANPCGVAEAATIKEAYLKALACDPVSAFGGIVALNKTLDEEAAEEIVKIFTEVIIAPDATEGAQAIVAAKKNLRLLVTGGLPDPRAKGIAAKTVAGGLLVQSRDNGVVDDLDLKVVTKRAPTEAELNDMKFAFRVGKHVKSNAIVYVKDGATVGIGAGQMSRVDSARIAARKAEDAAEAAGLAEPLTKGCVVASDAFFPFADGLLSAVQAGATAVIQPGGSMRDDEVIAAADEHGIAMVMTGMRHFRH.

In terms of domain architecture, MGS-like spans 6 to 158; the sequence is KHIPAPDLHR…KNHAYVATVV (153 aa).

This sequence belongs to the PurH family.

The catalysed reaction is (6R)-10-formyltetrahydrofolate + 5-amino-1-(5-phospho-beta-D-ribosyl)imidazole-4-carboxamide = 5-formamido-1-(5-phospho-D-ribosyl)imidazole-4-carboxamide + (6S)-5,6,7,8-tetrahydrofolate. The enzyme catalyses IMP + H2O = 5-formamido-1-(5-phospho-D-ribosyl)imidazole-4-carboxamide. Its pathway is purine metabolism; IMP biosynthesis via de novo pathway; 5-formamido-1-(5-phospho-D-ribosyl)imidazole-4-carboxamide from 5-amino-1-(5-phospho-D-ribosyl)imidazole-4-carboxamide (10-formyl THF route): step 1/1. It functions in the pathway purine metabolism; IMP biosynthesis via de novo pathway; IMP from 5-formamido-1-(5-phospho-D-ribosyl)imidazole-4-carboxamide: step 1/1. In Brucella anthropi (strain ATCC 49188 / DSM 6882 / CCUG 24695 / JCM 21032 / LMG 3331 / NBRC 15819 / NCTC 12168 / Alc 37) (Ochrobactrum anthropi), this protein is Bifunctional purine biosynthesis protein PurH.